A 620-amino-acid chain; its full sequence is 1-deoxy-D-xylulose-5-phosphate synthase (620 aa).

Thiamine diphosphate-binding positions include histidine 80 and 121 to 123 (GHS). Aspartate 152 contacts Mg(2+). Residues 153 to 154 (GA), asparagine 181, tyrosine 288, and glutamate 370 contribute to the thiamine diphosphate site. Asparagine 181 provides a ligand contact to Mg(2+).

It belongs to the transketolase family. DXPS subfamily. In terms of assembly, homodimer. Requires Mg(2+) as cofactor. The cofactor is thiamine diphosphate.

It catalyses the reaction D-glyceraldehyde 3-phosphate + pyruvate + H(+) = 1-deoxy-D-xylulose 5-phosphate + CO2. It functions in the pathway metabolic intermediate biosynthesis; 1-deoxy-D-xylulose 5-phosphate biosynthesis; 1-deoxy-D-xylulose 5-phosphate from D-glyceraldehyde 3-phosphate and pyruvate: step 1/1. Its function is as follows. Catalyzes the acyloin condensation reaction between C atoms 2 and 3 of pyruvate and glyceraldehyde 3-phosphate to yield 1-deoxy-D-xylulose-5-phosphate (DXP). The polypeptide is 1-deoxy-D-xylulose-5-phosphate synthase (Salmonella heidelberg (strain SL476)).